Here is a 449-residue protein sequence, read N- to C-terminus: uncharacterized protein (449 aa).

Acidic residues predominate over residues 1-11 (MLDAPEQDPVD). The tract at residues 1–33 (MLDAPEQDPVDPGDPASPPHGEAEQPLPGPRWP) is disordered. Residues 45–65 (LLLTALGGLLIAGLVTAIPAV) traverse the membrane as a helical segment. Residues 349–449 (QPPVPPPDIP…PGPAEPAPAG (101 aa)) form a disordered region. The span at 365 to 387 (PPIPLQLPTPRPAPPAQQLPSTP) shows a compositional bias: pro residues. Residues 409–418 (HAPASAAPAE) show a composition bias toward low complexity. The segment covering 437 to 449 (ATPPGPAEPAPAG) has biased composition (pro residues).

It is found in the cell membrane. The protein resides in the secreted. Functionally, may play a role in septum formation. This is an uncharacterized protein from Mycobacterium tuberculosis (strain CDC 1551 / Oshkosh).